The sequence spans 420 residues: Argininosuccinate synthase (420 aa).

23–31 (AYSGGLDTS) is a binding site for ATP. Tyr-102 serves as a coordination point for L-citrulline. Gly-132 contacts ATP. L-aspartate is bound by residues Thr-134, Asn-138, and Asp-139. Asn-138 contributes to the L-citrulline binding site. L-citrulline is bound by residues Arg-142, Ser-190, Glu-274, and Tyr-286.

This sequence belongs to the argininosuccinate synthase family. Type 1 subfamily. Homotetramer.

The protein resides in the cytoplasm. The enzyme catalyses L-citrulline + L-aspartate + ATP = 2-(N(omega)-L-arginino)succinate + AMP + diphosphate + H(+). The protein operates within amino-acid biosynthesis; L-arginine biosynthesis; L-arginine from L-ornithine and carbamoyl phosphate: step 2/3. In Renibacterium salmoninarum (strain ATCC 33209 / DSM 20767 / JCM 11484 / NBRC 15589 / NCIMB 2235), this protein is Argininosuccinate synthase.